The primary structure comprises 750 residues: Cation-transporting P-type ATPase B (750 aa).

The 64-residue stretch at 17-80 (RRIQLDVAGM…VIEQAGYRAT (64 aa)) folds into the HMA domain. 2 residues coordinate a metal cation: C28 and C31. Helical transmembrane passes span 104–124 (LIVAALLFVPLADLSTMFAIV), 129–149 (FPGWGYLLTALAAPIVTWAAW), 167–187 (ETLISAGILAATGWSLSTIFV), 200–220 (AILHSDSIYFEVAAGVTVFVL), 360–380 (IAAVFVPMVFVIAGLAGASWL), and 389–409 (AFSVVLGVLVIACPCTLGLAT). The active-site 4-aspartylphosphate intermediate is the D445. 6 helical membrane passes run 471-491 (VLALASAVEAASEHSVATAIV), 500-520 (VADFVAFAGCGVSGVVAEHHV), 547-567 (SRGETVVFVSVDGVACGAVAI), 663-683 (VAIGAADLILVRDSLGVVPVA), 693-713 (TIRINMIWAFGYNVAAIPIAS), and 715-735 (GLLNPLIAGAAMAFSSFFVVS).

It belongs to the cation transport ATPase (P-type) (TC 3.A.3) family. Type IB subfamily.

It localises to the cell membrane. It carries out the reaction ATP + H2O = ADP + phosphate + H(+). The protein is Cation-transporting P-type ATPase B (ctpB) of Mycobacterium leprae (strain TN).